We begin with the raw amino-acid sequence, 155 residues long: Large ribosomal subunit protein uL22c (155 aa).

It belongs to the universal ribosomal protein uL22 family. In terms of assembly, part of the 50S ribosomal subunit.

The protein localises to the plastid. It localises to the chloroplast. In terms of biological role, this protein binds specifically to 23S rRNA. Its function is as follows. The globular domain of the protein is located near the polypeptide exit tunnel on the outside of the subunit, while an extended beta-hairpin is found that lines the wall of the exit tunnel in the center of the 70S ribosome. In Solanum bulbocastanum (Wild potato), this protein is Large ribosomal subunit protein uL22c (rpl22).